The primary structure comprises 340 residues: tRNA N6-adenosine threonylcarbamoyltransferase (340 aa).

Positions 111 and 115 each coordinate Fe cation. Substrate-binding positions include 134–138, Asp-167, Gly-180, and Asn-272; that span reads LVSGG. Asp-300 serves as a coordination point for Fe cation.

Belongs to the KAE1 / TsaD family. Fe(2+) serves as cofactor.

It localises to the cytoplasm. It catalyses the reaction L-threonylcarbamoyladenylate + adenosine(37) in tRNA = N(6)-L-threonylcarbamoyladenosine(37) in tRNA + AMP + H(+). Functionally, required for the formation of a threonylcarbamoyl group on adenosine at position 37 (t(6)A37) in tRNAs that read codons beginning with adenine. Is involved in the transfer of the threonylcarbamoyl moiety of threonylcarbamoyl-AMP (TC-AMP) to the N6 group of A37, together with TsaE and TsaB. TsaD likely plays a direct catalytic role in this reaction. In Proteus mirabilis (strain HI4320), this protein is tRNA N6-adenosine threonylcarbamoyltransferase.